The following is a 215-amino-acid chain: Cytidylate kinase (215 aa).

10–18 (GPAASGKGT) lines the ATP pocket.

This sequence belongs to the cytidylate kinase family. Type 1 subfamily.

Its subcellular location is the cytoplasm. The catalysed reaction is CMP + ATP = CDP + ADP. The enzyme catalyses dCMP + ATP = dCDP + ADP. The protein is Cytidylate kinase of Bartonella tribocorum (strain CIP 105476 / IBS 506).